The sequence spans 207 residues: Small ribosomal subunit protein uS4 (207 aa).

Residues 35–54 (RPKPPGPQLGRPRRLSDRGQ) are disordered. One can recognise an S4 RNA-binding domain in the interval 97 to 163 (RRLDNVLFRL…AYFKTLAENI (67 aa)).

Belongs to the universal ribosomal protein uS4 family. In terms of assembly, part of the 30S ribosomal subunit. Contacts protein S5. The interaction surface between S4 and S5 is involved in control of translational fidelity.

One of the primary rRNA binding proteins, it binds directly to 16S rRNA where it nucleates assembly of the body of the 30S subunit. In terms of biological role, with S5 and S12 plays an important role in translational accuracy. The polypeptide is Small ribosomal subunit protein uS4 (Dehalococcoides mccartyi (strain CBDB1)).